A 475-amino-acid chain; its full sequence is Mitochondrial adenyl nucleotide antiporter SLC25A24 (475 aa).

The tract at residues 1 to 173 (MLRWLRAFVL…RFWKHSTGID (173 aa)) is regulatory N-terminal domain. At 1–197 (MLRWLRAFVL…EKKSGQWWRQ (197 aa)) the chain is on the mitochondrial intermembrane side. 4 EF-hand domains span residues 19-54 (EPPT…LGIP), 55-88 (LGQD…KDHE), 86-121 (DHEK…LGLH), and 122-157 (ISEK…NPVT). Positions 32, 34, 36, 38, 43, 68, 70, 72, 74, 79, 99, 101, 103, 105, 110, 135, 137, 139, 141, and 146 each coordinate Ca(2+). The linker region stretch occupies residues 159 to 168 (IEEIIRFWKH). The segment at 174-475 (IGDSLTIPDE…MKQTLGVAQK (302 aa)) is C-terminal transmembrane transporter domain. Solcar repeat units lie at residues 192 to 276 (GQWW…YKKL), 284 to 369 (LGTF…LKSY), and 381 to 469 (PGVM…MKQT). The helical transmembrane segment at 198 to 215 (LLAGGVAGAVSRTSTAPL) threads the bilayer. Over 216–250 (DRLKVMMQVHGSKSMNIFGGFRQMVKEGGIRSLWR) the chain is Mitochondrial matrix. A helical membrane pass occupies residues 251-270 (GNGTNVIKIAPETAVKFWAY). At 271-293 (EQYKKLLTEEGQKLGTFERFISG) the chain is on the mitochondrial intermembrane side. A helical transmembrane segment spans residues 294 to 307 (SMAGATAQTFIYPM). At 308–343 (EVLKTRLAVAKTGQYSGIYGCAKKILKHEGFGAFYK) the chain is on the mitochondrial matrix side. Position 318 is an N6-acetyllysine; alternate (K318). K318 is modified (N6-succinyllysine; alternate). An N6-acetyllysine modification is found at K334. The helical transmembrane segment at 344 to 363 (GYIPNLLGIIPYAGIDLAVY) threads the bilayer. The Mitochondrial intermembrane portion of the chain corresponds to 364 to 386 (ELLKSYWLDNFAKDSVNPGVMVL). Residues 387 to 404 (LSCGALSSTCGQLASYPL) form a helical membrane-spanning segment. The Mitochondrial matrix portion of the chain corresponds to 405 to 443 (ALVRTRMQAQATVEGAPQLSMVGLFQRIVSKEGVSGLYR). K435 carries the N6-acetyllysine; alternate modification. Position 435 is an N6-succinyllysine; alternate (K435). The helical transmembrane segment at 444–463 (GITPNFMKVLPAVGISYVVY) threads the bilayer. Residues 464–475 (ENMKQTLGVAQK) lie on the Mitochondrial intermembrane side of the membrane.

This sequence belongs to the mitochondrial carrier (TC 2.A.29) family. As to quaternary structure, monomer.

The protein resides in the mitochondrion inner membrane. It carries out the reaction Mg(2+)(out) + phosphate(in) + ATP(out) = Mg(2+)(in) + phosphate(out) + ATP(in). The enzyme catalyses ADP(out) + phosphate(in) + H(+)(out) = ADP(in) + phosphate(out) + H(+)(in). The catalysed reaction is AMP(out) + phosphate(in) = AMP(in) + phosphate(out). It catalyses the reaction phosphate(in) + ATP(out) + 2 H(+)(out) = phosphate(out) + ATP(in) + 2 H(+)(in). It carries out the reaction dADP(in) + ADP(out) = dADP(out) + ADP(in). The enzyme catalyses Mg(2+)(in) + ADP(out) + ATP(in) + H(+)(out) = Mg(2+)(out) + ADP(in) + ATP(out) + H(+)(in). The catalysed reaction is ADP(out) + diphosphate(in) = ADP(in) + diphosphate(out). It catalyses the reaction dAMP(in) + ADP(out) + H(+)(out) = dAMP(out) + ADP(in) + H(+)(in). It carries out the reaction 3'-AMP(in) + ADP(out) + H(+)(out) = 3'-AMP(out) + ADP(in) + H(+)(in). The enzyme catalyses dAMP(out) + phosphate(in) = dAMP(in) + phosphate(out). The catalysed reaction is 3'-AMP(out) + phosphate(in) = 3'-AMP(in) + phosphate(out). It catalyses the reaction dADP(out) + phosphate(in) + H(+)(out) = dADP(in) + phosphate(out) + H(+)(in). Activated by an increase in cytosolic calcium levels that induce a conformational change of the N-terminal regulatory domain, uncapping the channel and allowing transport. Inhibited by bathophenanthroline, mersalyl, p-hydroxymercuribenzoate, bromcresol purple and tannic acid. Electroneutral antiporter that mediates the transport of adenyl nucleotides through the inner mitochondrial membrane. Originally identified as an ATP-magnesium/inorganic phosphate antiporter, it also acts as a broad specificity adenyl nucleotide antiporter. By regulating the mitochondrial matrix adenyl nucleotide pool could adapt to changing cellular energetic demands and indirectly regulate adenyl nucleotide-dependent metabolic pathways. In vitro, a low activity is also observed with guanyl and pyrimidine nucleotides. May play a role in protecting cells against oxidative stress-induced cell death, by buffering calcium levels in the mitochondrial matrix through the formation of calcium-phosphate precipitates. The chain is Mitochondrial adenyl nucleotide antiporter SLC25A24 from Mus musculus (Mouse).